We begin with the raw amino-acid sequence, 264 residues long: Proteasome assembly chaperone 2 (264 aa).

The residue at position 137 (Thr137) is a Phosphothreonine.

Belongs to the PSMG2 family. In terms of assembly, forms a heterodimer with PSMG1. The PSMG1-PSMG2 heterodimer interacts directly with the PSMA5 and PSMA7 proteasome alpha subunits. Degraded by the proteasome upon completion of 20S proteasome maturation. As to expression, widely expressed with highest levels in lung, brain and colon. Moderately expressed in muscle, stomach, spleen and heart. Weakly expressed in small intestine, pancreas and liver. Highly expressed in hepatocellular carcinomas with low levels in surrounding liver tissue.

It localises to the nucleus. Its function is as follows. Chaperone protein which promotes assembly of the 20S proteasome as part of a heterodimer with PSMG1. The PSMG1-PSMG2 heterodimer binds to the PSMA5 and PSMA7 proteasome subunits, promotes assembly of the proteasome alpha subunits into the heteroheptameric alpha ring and prevents alpha ring dimerization. The chain is Proteasome assembly chaperone 2 from Homo sapiens (Human).